The sequence spans 214 residues: UPF0690 protein C1orf52 homolog (214 aa).

Disordered regions lie at residues 1-66 (MSDE…SVSK) and 81-214 (DSRA…QCLD). Residues 32-44 (PEATASSAPAEPQ) show a composition bias toward low complexity. 2 stretches are compositionally biased toward basic and acidic residues: residues 49–61 (RAAE…DELF) and 81–97 (DSRA…EFKV). Over residues 152-165 (EEEEEEQQPDSDDD) the composition is skewed to acidic residues. S162 is subject to Phosphoserine. Basic and acidic residues-rich tracts occupy residues 179–192 (VETF…KRDI) and 200–214 (NFVE…QCLD).

It belongs to the UPF0690 family.

The sequence is that of UPF0690 protein C1orf52 homolog from Danio rerio (Zebrafish).